A 278-amino-acid polypeptide reads, in one-letter code: Orotidine 5'-phosphate decarboxylase (278 aa).

Residue K96 is the Proton donor of the active site.

The protein belongs to the OMP decarboxylase family. Type 2 subfamily.

The enzyme catalyses orotidine 5'-phosphate + H(+) = UMP + CO2. Its pathway is pyrimidine metabolism; UMP biosynthesis via de novo pathway; UMP from orotate: step 2/2. The chain is Orotidine 5'-phosphate decarboxylase from Salinispora arenicola (strain CNS-205).